A 410-amino-acid polypeptide reads, in one-letter code: Mating-type locus allele B1 protein (410 aa).

A variable domain between B alleles region spans residues 1 to 110 (MSSDPNFSLI…FNVVSPDVGC (110 aa)). The homeobox; TALE-type DNA-binding region spans 107–184 (DVGCRNLSED…NARRRSGWSH (78 aa)). The interval 111 to 410 (RNLSEDLPAY…PFLCLSVAFV (300 aa)) is highly conserved between B alleles. Disordered regions lie at residues 202–239 (RAKL…PLTP), 278–335 (TPKP…TPEL), and 374–395 (ARGN…PDEV). Positions 205–233 (LSSSNQSTPPSSTSDSLSNNLDDVLSDNL) are enriched in low complexity. The Nuclear localization signal motif lies at 276 to 308 (KKTPKPGMPRPVTTVAKRHPARKTKPAAKPKSR). Over residues 291–307 (AKRHPARKTKPAAKPKS) the composition is skewed to basic residues. The segment covering 312 to 335 (PRASTTPSIDSTLDSSKLESTPEL) has biased composition (polar residues). A not essential for B1 function region spans residues 333–410 (PELSMCSTAD…PFLCLSVAFV (78 aa)). A compositionally biased stretch (basic residues) spans 375–388 (RGNRKVKALPKRAG).

Belongs to the TALE/M-ATYP homeobox family.

The protein localises to the nucleus. In terms of biological role, the B locus has at least 25 alleles, and any combination of two different B alleles yields a multimeric regulatory protein, that activates genes responsible for the pathogenicity and for the sexual development of the fungus within the corn plant. The protein is Mating-type locus allele B1 protein of Mycosarcoma maydis (Corn smut fungus).